The following is a 276-amino-acid chain: Large ribosomal subunit protein uL2 (276 aa).

Disordered stretches follow at residues 37 to 59 and 225 to 276; these read QIQK…GGHK and VMNP…RHKR. Residues 39-49 are compositionally biased toward polar residues; it reads QKSGRNNNGHI. A compositionally biased stretch (basic residues) spans 50 to 59; the sequence is TTRHKGGGHK.

This sequence belongs to the universal ribosomal protein uL2 family. In terms of assembly, part of the 50S ribosomal subunit. Forms a bridge to the 30S subunit in the 70S ribosome.

Functionally, one of the primary rRNA binding proteins. Required for association of the 30S and 50S subunits to form the 70S ribosome, for tRNA binding and peptide bond formation. It has been suggested to have peptidyltransferase activity; this is somewhat controversial. Makes several contacts with the 16S rRNA in the 70S ribosome. The sequence is that of Large ribosomal subunit protein uL2 from Ralstonia pickettii (strain 12J).